Reading from the N-terminus, the 117-residue chain is Protein RALF-like 27 (117 aa).

The first 27 residues, 1–27 (MTKTFFSFSFFFTSSLLLLLAATSATA), serve as a signal peptide directing secretion. The propeptide at 28-71 (STGNVTSGLRYDGCAPGDTVGECITATVEEEDEEGVEAVVRRIL) is removed in mature form. Asn31 is a glycosylation site (N-linked (GlcNAc...) asparagine). Intrachain disulfides connect Cys88-Cys96 and Cys107-Cys113.

It belongs to the plant rapid alkalinization factor (RALF) family.

The protein resides in the secreted. In terms of biological role, cell signaling peptide that may regulate plant stress, growth, and development. Mediates a rapid alkalinization of extracellular space by mediating a transient increase in the cytoplasmic Ca(2+) concentration leading to a calcium-dependent signaling events through a cell surface receptor and a concomitant activation of some intracellular mitogen-activated protein kinases. This is Protein RALF-like 27 (RALFL27) from Arabidopsis thaliana (Mouse-ear cress).